A 105-amino-acid polypeptide reads, in one-letter code: Endoribonuclease MazF1 (105 aa).

This sequence belongs to the PemK/MazF family. As to quaternary structure, forms a complex with cognate antitoxin MazE1.

Toxic component of a type II toxin-antitoxin (TA) system. Acts as an endoribonuclease on single-strand RNA, cleaving between the first and second bases in the sequence UCGCU. Neutralized by coexpression with cognate antitoxin MazE1. In Mycobacterium bovis (strain ATCC BAA-935 / AF2122/97), this protein is Endoribonuclease MazF1 (mazF1).